Consider the following 276-residue polypeptide: Ferrous iron permease EfeU (276 aa).

A topological domain (periplasmic) is located at residue Met-1. Residues 2–22 (FVPFLIMLREGLEAALIVSLI) traverse the membrane as a helical segment. Over 23–34 (ASYLKRTQRGRW) the chain is Cytoplasmic. Residues 35-55 (IGVMWIGVLLAAALCLGLGIF) traverse the membrane as a helical segment. Residues 56-69 (INETTGEFPQKEQE) lie on the Periplasmic side of the membrane. The helical transmembrane segment at 70 to 90 (LFEGIVAVIAVVILTWMVFWM) threads the bilayer. Topologically, residues 91-118 (RKVSRNVKVQLEQAVDSALQRGNHHGWA) are cytoplasmic. A helical transmembrane segment spans residues 119 to 139 (LVMMVFFAVAREGLESVFFLL). Residues 140–147 (AAFQQDVG) lie on the Periplasmic side of the membrane. Residues 148-168 (IWPPLGAMLGLATAVVLGFLL) traverse the membrane as a helical segment. The Cytoplasmic segment spans residues 169–179 (YWGGIRLNLGA). A helical membrane pass occupies residues 180-200 (FFKWTSLFILFVAAGLAAGAI). At 201 to 244 (RAFHEAGLWNHFQEIAFDMSAVLSTHSLFGTLMEGIFGYQEAPS) the chain is on the periplasmic side. The helical transmembrane segment at 245–265 (VSEVAVWFIYLIPALVAFVLP) threads the bilayer. The Cytoplasmic segment spans residues 266-276 (PRAGATASRSV).

Belongs to the oxidase-dependent Fe transporter (OFeT) (TC 9.A.10.1) family. In terms of assembly, part of a ferrous iron transporter composed of EfeU, EfeO and EfeB.

It localises to the cell inner membrane. Functionally, uptake of Fe(2+) ions across the membrane. The protein is Ferrous iron permease EfeU (efeU) of Escherichia coli O6:K15:H31 (strain 536 / UPEC).